Here is a 461-residue protein sequence, read N- to C-terminus: Putative forkhead-related transcription factor fkh-5 (461 aa).

Positions Gln171–Thr262 form a DNA-binding region, fork-head.

It is found in the nucleus. Its function is as follows. Transcription factor. Binds to DNA sequence motif 5'-CTGTTTCA-3'. Regulates expression of a class of small RNAs, known as 21U-RNAs, perhaps acting redundantly with fkh-4 and fkh-3. The polypeptide is Putative forkhead-related transcription factor fkh-5 (fkh-5) (Caenorhabditis elegans).